A 73-amino-acid polypeptide reads, in one-letter code: Translational regulator CsrA (73 aa).

This sequence belongs to the CsrA/RsmA family. Homodimer; the beta-strands of each monomer intercalate to form a hydrophobic core, while the alpha-helices form wings that extend away from the core.

It localises to the cytoplasm. In terms of biological role, a translational regulator that binds mRNA to regulate translation initiation and/or mRNA stability. Usually binds in the 5'-UTR at or near the Shine-Dalgarno sequence preventing ribosome-binding, thus repressing translation. Its main target seems to be the major flagellin gene, while its function is anatagonized by FliW. This Lachnospira eligens (strain ATCC 27750 / DSM 3376 / VPI C15-48 / C15-B4) (Eubacterium eligens) protein is Translational regulator CsrA.